Reading from the N-terminus, the 105-residue chain is UPF0145 protein Aflv_1588 (105 aa).

It belongs to the UPF0145 family.

This Anoxybacillus flavithermus (strain DSM 21510 / WK1) protein is UPF0145 protein Aflv_1588.